The sequence spans 173 residues: Secreted RxLR effector protein RXLR-C12 (173 aa).

The N-terminal stretch at 1–18 is a signal peptide; it reads MLQFATAFLAISANVVMT. The short motif at 41 to 55 is the RxLR-dEER element; it reads RRLRTHEIGTVPEER. N-linked (GlcNAc...) asparagine glycosylation occurs at N155.

It belongs to the RxLR effector family.

It is found in the secreted. Its subcellular location is the host cytoplasm. It localises to the host nucleus. Functionally, secreted effector that suppresses pattern-triggered immunity (PTI) in plant host. The protein is Secreted RxLR effector protein RXLR-C12 of Plasmopara halstedii (Downy mildew of sunflower).